We begin with the raw amino-acid sequence, 809 residues long: MSEYTRQLPVVALRNMAVMPGMLIHFDVNRKVSIEAIEAAMLLNQQVLLVSQIDAETENPTADDLYRVGTIAEIKQMIKLPGNVIRVLVTGLERATLDSLVSEQPYLKAQLTSKEAELLNLTEAEEEAMVRALRDLFEVYTTENNKLNKDIIRQVEASREIEKMVEQLSIHIPMTLEDKQLLLAASDLMEQYERLCLILADEIEVMRIKRELQNKVKDKVDKNQKDYIMREQLKVIKEELGETSSVSDIMQYLEQLKELVASDEVKEKIKKEIERFQNVAGSNSESAVARGYVETLLSLPWDKVSEDFMDLAYAKEVLETEHYGLKKVKERVLDFLAVRQLTEKGDSPIICLVGPPGTGKTSIARSIAKALNKEYVRISLGGVRDEAEIRGHRRTYVGALPGRIITGLKQAKVKNPLMLLDEIDKMSSDYKGDTASAMLEVLDSEQNCNFVDHYVEIPVDLSEVMFIATANTTQTIPKPLLDRMEIIEVSSYTENEKFHIAKNHLLNKQIEKNGLKKSQISISEKALRKIISDYTREAGVRGLERKISEVCRKIARELLEQESKENQNLIKSAKNKSNNKNQSHSEVAAAVEAEEISVTTKPSKIKVTEKNITTYLGKPKFRNEIASQKDEVGIVCGLAWTSVGGTTLQIEVNSLPGKGALILTGQMGDVMKESAQLGISYIRSLSKEYKISEEYFQKNDIHIHIPEGATPKDGPSAGITMATAMLSAITGKKVHAKVAMTGEITLRGRVLPIGGLKEKLLAAKNTGIKKVLIPEKNRPDLEELEQEITEGMEVICVATMDEVLKHALV.

Positions 8 to 203 (LPVVALRNMA…RLCLILADEI (196 aa)) constitute a Lon N-terminal domain. 354–361 (GPPGTGKT) contributes to the ATP binding site. A Lon proteolytic domain is found at 629 to 809 (KDEVGIVCGL…MDEVLKHALV (181 aa)). Catalysis depends on residues Ser716 and Lys759.

This sequence belongs to the peptidase S16 family. Homohexamer. Organized in a ring with a central cavity.

The protein localises to the cytoplasm. The catalysed reaction is Hydrolysis of proteins in presence of ATP.. In terms of biological role, ATP-dependent serine protease that mediates the selective degradation of mutant and abnormal proteins as well as certain short-lived regulatory proteins. Required for cellular homeostasis and for survival from DNA damage and developmental changes induced by stress. Degrades polypeptides processively to yield small peptide fragments that are 5 to 10 amino acids long. Binds to DNA in a double-stranded, site-specific manner. The chain is Lon protease from Lachnoclostridium phytofermentans (strain ATCC 700394 / DSM 18823 / ISDg) (Clostridium phytofermentans).